The primary structure comprises 141 residues: Transmembrane protein 216 (141 aa).

The next 4 membrane-spanning stretches (helical) occupy residues 15–35 (VLFF…LLIF), 49–69 (LVLD…RLFF), 82–102 (LGIS…YLLL), and 115–135 (SILL…LATF).

In terms of assembly, part of the tectonic-like complex (also named B9 complex). Interacts with TMEM107.

The protein resides in the membrane. The protein localises to the cytoplasm. It is found in the cytoskeleton. It localises to the cilium basal body. In terms of biological role, part of the tectonic-like complex which is required for tissue-specific ciliogenesis and may regulate ciliary membrane composition. The chain is Transmembrane protein 216 (Tmem216) from Mus musculus (Mouse).